The sequence spans 274 residues: Penicillin-insensitive murein endopeptidase (274 aa).

Positions 1 to 19 are cleaved as a signal peptide; it reads MKKTAIALLAWFVSSASLA. 3 cysteine pairs are disulfide-bonded: cysteine 44-cysteine 265, cysteine 187-cysteine 235, and cysteine 216-cysteine 223. Histidine 110, histidine 113, aspartate 120, aspartate 147, histidine 150, and histidine 211 together coordinate Zn(2+). Positions 225-274 are disordered; that stretch reads DQPLPPPGDGCGAELQSWFEPPKPGTTKPEKKTPPPLPPSCQALLDEHVL.

It belongs to the peptidase M74 family. As to quaternary structure, dimer. Zn(2+) serves as cofactor.

The protein localises to the periplasm. Functionally, murein endopeptidase that cleaves the D-alanyl-meso-2,6-diamino-pimelyl amide bond that connects peptidoglycan strands. Likely plays a role in the removal of murein from the sacculus. The polypeptide is Penicillin-insensitive murein endopeptidase (Salmonella paratyphi A (strain AKU_12601)).